We begin with the raw amino-acid sequence, 312 residues long: MISAFYAFLDYLKNIKTASPHTLRNYCIDLNSFKSFLEKQGELSPSSPICLLTKERKETELPFSLFTKDSVRLYVLELMQENKAKRTIKRRLSAIKSFSQYCIKNRIIFEDPTETIHGPRLPKELPSPITYEQVEILMATPDLSKYTGFRDRCLLELFYSSGLRISEIVAINHWDIDFNSNLIRIRGKGKKERLVPMTPHAAQWLQQYLHHPERAHVEQDPQAFFLNRFGKRLTTRSIDRKFQKYLRQSGLSGSITPHTIRHTIATHWLENGMDLKTIQALLGHSSLETTTIYTHVSMKLKKQTHEESHPHS.

The Core-binding (CB) domain maps to 1 to 103 (MISAFYAFLD…AIKSFSQYCI (103 aa)). The Tyr recombinase domain maps to 124 to 306 (ELPSPITYEQ…SMKLKKQTHE (183 aa)). Residues R164, K188, H258, R261, and H284 contribute to the active site. The active-site O-(3'-phospho-DNA)-tyrosine intermediate is Y293.

Belongs to the 'phage' integrase family. XerC subfamily. Forms a cyclic heterotetrameric complex composed of two molecules of XerC and two molecules of XerD.

It localises to the cytoplasm. Its function is as follows. Site-specific tyrosine recombinase, which acts by catalyzing the cutting and rejoining of the recombining DNA molecules. The XerC-XerD complex is essential to convert dimers of the bacterial chromosome into monomers to permit their segregation at cell division. It also contributes to the segregational stability of plasmids. The polypeptide is Tyrosine recombinase XerC (Chlamydia caviae (strain ATCC VR-813 / DSM 19441 / 03DC25 / GPIC) (Chlamydophila caviae)).